The following is a 133-amino-acid chain: Fatty acid-binding protein (133 aa).

The protein belongs to the calycin superfamily. Fatty-acid binding protein (FABP) family.

This chain is Fatty acid-binding protein, found in Clonorchis sinensis (Chinese liver fluke).